A 217-amino-acid polypeptide reads, in one-letter code: Large ribosomal subunit protein uL4 (217 aa).

A disordered region spans residues 58 to 90 (TAATKGRSDVSGGGKKPWRQKGTGRARSGTSRS).

This sequence belongs to the universal ribosomal protein uL4 family. Part of the 50S ribosomal subunit.

One of the primary rRNA binding proteins, this protein initially binds near the 5'-end of the 23S rRNA. It is important during the early stages of 50S assembly. It makes multiple contacts with different domains of the 23S rRNA in the assembled 50S subunit and ribosome. Functionally, forms part of the polypeptide exit tunnel. The sequence is that of Large ribosomal subunit protein uL4 from Syntrophus aciditrophicus (strain SB).